Consider the following 131-residue polypeptide: Small ribosomal subunit protein uS8 (131 aa).

Belongs to the universal ribosomal protein uS8 family. In terms of assembly, part of the 30S ribosomal subunit. Contacts proteins S5 and S12.

One of the primary rRNA binding proteins, it binds directly to 16S rRNA central domain where it helps coordinate assembly of the platform of the 30S subunit. This is Small ribosomal subunit protein uS8 from Chlorobium luteolum (strain DSM 273 / BCRC 81028 / 2530) (Pelodictyon luteolum).